A 134-amino-acid chain; its full sequence is MTIRPAYRPKIIKKRTKHFIRHQSDRYAKLSHKWRKPKGIDNRVRRRFKGQYLMPNIGYGSNKRTRHMLPTGFKKFLVHNVRELEVLLMQNRVYCGEIAHAVSSKKRKEIVERAKQLSIRLTNPNGRLRSQENE.

It belongs to the eukaryotic ribosomal protein eL32 family.

The polypeptide is Large ribosomal subunit protein eL32 (RpL32) (Drosophila affinis (Fruit fly)).